Here is a 213-residue protein sequence, read N- to C-terminus: Glycerol-3-phosphate acyltransferase (213 aa).

The next 6 helical transmembrane spans lie at 2–22 (ITIVLLILAYLLGSIPSGLWI), 52–74 (AGMATFVIDFFKGTLATLLPIIF), 81–100 (PLIFGLLAVIGHTFPIFAGF), 112–132 (VIFGFAPIFCLYLAIIFFGAL), 143–163 (VTASIAAVIGVLLFPLFGFIL), and 164–184 (SNYDSLFITIILALASLIIIR).

Belongs to the PlsY family. In terms of assembly, probably interacts with PlsX.

It localises to the cell membrane. The enzyme catalyses an acyl phosphate + sn-glycerol 3-phosphate = a 1-acyl-sn-glycero-3-phosphate + phosphate. The protein operates within lipid metabolism; phospholipid metabolism. Functionally, catalyzes the transfer of an acyl group from acyl-phosphate (acyl-PO(4)) to glycerol-3-phosphate (G3P) to form lysophosphatidic acid (LPA). This enzyme utilizes acyl-phosphate as fatty acyl donor, but not acyl-CoA or acyl-ACP. This Streptococcus pneumoniae (strain Hungary19A-6) protein is Glycerol-3-phosphate acyltransferase.